Reading from the N-terminus, the 211-residue chain is UPF0056 membrane protein YvbG (211 aa).

Helical transmembrane passes span 1–21 (MMFS…NPIG), 47–67 (ILSF…FKLF), 69–89 (INIH…AYNL), 114–134 (ISVT…ATVM), 150–170 (MIGI…SAFI), and 188–208 (LILA…MFPV).

It belongs to the UPF0056 (MarC) family.

It localises to the cell membrane. This chain is UPF0056 membrane protein YvbG (yvbG), found in Bacillus subtilis (strain 168).